A 257-amino-acid chain; its full sequence is Baramicin A1 (257 aa).

An N-terminal signal peptide occupies residues 1–19 (MKSFGLIALAICGVICVAA). Residues 20–21 (EP) constitute a propeptide that is removed on maturation. The residue at position 22 (Gln22) is a Pyrrolidone carboxylic acid. The disordered stretch occupies residues 95 to 122 (GPNFSAKNLGPNGAKSVGIPQRARRSPQ). Asn97 carries N-linked (GlcNAc...) asparagine glycosylation. Positions 118–121 (RRSP) are excised as a propeptide. Residue Gln122 is modified to Pyrrolidone carboxylic acid. Residues 145–148 (RRSP) constitute a propeptide that is removed on maturation. Gln149 carries the pyrrolidone carboxylic acid modification. A propeptide spanning residues 172–175 (RRSP) is cleaved from the precursor. At Gln176 the chain carries Pyrrolidone carboxylic acid. Positions 199-204 (RRGIND) are excised as a propeptide. An N-linked (GlcNAc...) asparagine glycan is attached at Asn225.

Proteolytically cleaved. In terms of tissue distribution, hemolymph (at protein level).

Its subcellular location is the secreted. In terms of biological role, secreted immune-induced peptides induced by Toll signaling. Has a significant role in resistance to infection by the entomopathogenic fungus B.bassiana R444 and weak antifungal activity against M.rileyi PHP1705. In adult males, activity appears to be important for neuromuscular processes that mediate correct wing posture upon Toll activation. The protein is Baramicin A1 of Drosophila melanogaster (Fruit fly).